Consider the following 123-residue polypeptide: Large ribosomal subunit protein bL19 (123 aa).

The protein belongs to the bacterial ribosomal protein bL19 family.

Functionally, this protein is located at the 30S-50S ribosomal subunit interface and may play a role in the structure and function of the aminoacyl-tRNA binding site. The polypeptide is Large ribosomal subunit protein bL19 (Ureaplasma urealyticum serovar 10 (strain ATCC 33699 / Western)).